The primary structure comprises 328 residues: MSNNDFLVLKNITKAFGKAVVIDNLDLTIKRGTMVTLLGPSGCGKTTVLRLVAGLENPTSGQIFIDGEDVTKSSIQNRDICIVFQSYALFPHMSIGDNVGYGLKMQGIGKEERAQRVKEALELVDLAGFEDRFVDQISGGQQQRVALARALVLKPKVLLFDEPLSNLDANLRRSMREKIRELQQRLGITSLYVTHDQTEAFAVSDEVIVMNKGKIMQKAPAKELYLRPNSLFLANFMGESSIFDGKLENGVADINGYSVPLKDAAQFNLPDGECLVGIRPEAIYLAAEGSDAQRCEIKSAVYMGQPLGKWLQTGRGKDLLVNCKPEGF.

In terms of domain architecture, ABC transporter spans 7-237 (LVLKNITKAF…PNSLFLANFM (231 aa)). Position 39–46 (39–46 (GPSGCGKT)) interacts with ATP.

The protein belongs to the ABC transporter superfamily. Fe(3+) ion importer (TC 3.A.1.10) family. The complex is composed of two ATP-binding proteins (FbpC), two transmembrane proteins (FbpB) and a solute-binding protein (FbpA).

The protein resides in the cell inner membrane. The catalysed reaction is Fe(3+)(out) + ATP + H2O = Fe(3+)(in) + ADP + phosphate + H(+). Functionally, part of the ABC transporter complex FbpABC involved in Fe(3+) ions import. Responsible for energy coupling to the transport system. The sequence is that of Fe(3+) ions import ATP-binding protein FbpC 1 from Haemophilus influenzae (strain ATCC 51907 / DSM 11121 / KW20 / Rd).